The following is a 273-amino-acid chain: 4-hydroxy-tetrahydrodipicolinate reductase (273 aa).

NAD(+) contacts are provided by residues G12 to M17 and E38. Residue R39 participates in NADP(+) binding. Residues G102 to T104 and A126 to F129 contribute to the NAD(+) site. H159 serves as the catalytic Proton donor/acceptor. H160 is a binding site for (S)-2,3,4,5-tetrahydrodipicolinate. Residue K163 is the Proton donor of the active site. A (S)-2,3,4,5-tetrahydrodipicolinate-binding site is contributed by G169–T170.

It belongs to the DapB family. Homotetramer.

The protein localises to the cytoplasm. It carries out the reaction (S)-2,3,4,5-tetrahydrodipicolinate + NAD(+) + H2O = (2S,4S)-4-hydroxy-2,3,4,5-tetrahydrodipicolinate + NADH + H(+). The enzyme catalyses (S)-2,3,4,5-tetrahydrodipicolinate + NADP(+) + H2O = (2S,4S)-4-hydroxy-2,3,4,5-tetrahydrodipicolinate + NADPH + H(+). Its pathway is amino-acid biosynthesis; L-lysine biosynthesis via DAP pathway; (S)-tetrahydrodipicolinate from L-aspartate: step 4/4. Its function is as follows. Catalyzes the conversion of 4-hydroxy-tetrahydrodipicolinate (HTPA) to tetrahydrodipicolinate. The chain is 4-hydroxy-tetrahydrodipicolinate reductase from Photorhabdus laumondii subsp. laumondii (strain DSM 15139 / CIP 105565 / TT01) (Photorhabdus luminescens subsp. laumondii).